We begin with the raw amino-acid sequence, 801 residues long: Elongation factor G, mitochondrial (801 aa).

The transit peptide at 1 to 24 (MRCPSLARLPHRAISGLTRLPVRL) directs the protein to the mitochondrion. Positions 99 to 386 (SRIRNIGIAA…GVIDYLPNPS (288 aa)) constitute a tr-type G domain. GTP contacts are provided by residues 108 to 115 (AHIDSGKT), 184 to 188 (DTPGH), and 238 to 241 (NKMD).

It belongs to the TRAFAC class translation factor GTPase superfamily. Classic translation factor GTPase family. EF-G/EF-2 subfamily.

It localises to the mitochondrion. It participates in protein biosynthesis; polypeptide chain elongation. Its function is as follows. Mitochondrial GTPase that catalyzes the GTP-dependent ribosomal translocation step during translation elongation. During this step, the ribosome changes from the pre-translocational (PRE) to the post-translocational (POST) state as the newly formed A-site-bound peptidyl-tRNA and P-site-bound deacylated tRNA move to the P and E sites, respectively. Catalyzes the coordinated movement of the two tRNA molecules, the mRNA and conformational changes in the ribosome. The chain is Elongation factor G, mitochondrial (mef1) from Aspergillus clavatus (strain ATCC 1007 / CBS 513.65 / DSM 816 / NCTC 3887 / NRRL 1 / QM 1276 / 107).